The primary structure comprises 153 residues: Endoribonuclease YbeY (153 aa).

Residues histidine 114, histidine 118, and histidine 124 each contribute to the Zn(2+) site.

Belongs to the endoribonuclease YbeY family. Zn(2+) serves as cofactor.

The protein localises to the cytoplasm. Its function is as follows. Single strand-specific metallo-endoribonuclease involved in late-stage 70S ribosome quality control and in maturation of the 3' terminus of the 16S rRNA. This is Endoribonuclease YbeY from Shewanella baltica (strain OS185).